The chain runs to 592 residues: A-type ATP synthase subunit A (592 aa).

234-241 contacts ATP; the sequence is GPFGSGKT.

This sequence belongs to the ATPase alpha/beta chains family. In terms of assembly, has multiple subunits with at least A(3), B(3), C, D, E, F, H, I and proteolipid K(x).

It localises to the cell membrane. The enzyme catalyses ATP + H2O + 4 H(+)(in) = ADP + phosphate + 5 H(+)(out). Functionally, produces ATP from ADP in the presence of a proton gradient across the membrane. The archaeal alpha chain is a catalytic subunit. Its function is as follows. Component of the A-type ATP synthase that produces ATP from ADP in the presence of a proton gradient across the membrane. The A chain is the catalytic subunit. In Sulfolobus acidocaldarius (strain ATCC 33909 / DSM 639 / JCM 8929 / NBRC 15157 / NCIMB 11770), this protein is A-type ATP synthase subunit A.